Consider the following 263-residue polypeptide: tRNA pseudouridine synthase A (263 aa).

Aspartate 73 acts as the Nucleophile in catalysis. Tyrosine 131 provides a ligand contact to substrate.

This sequence belongs to the tRNA pseudouridine synthase TruA family. As to quaternary structure, homodimer.

The catalysed reaction is uridine(38/39/40) in tRNA = pseudouridine(38/39/40) in tRNA. Functionally, formation of pseudouridine at positions 38, 39 and 40 in the anticodon stem and loop of transfer RNAs. This Mycoplasmoides gallisepticum (strain R(low / passage 15 / clone 2)) (Mycoplasma gallisepticum) protein is tRNA pseudouridine synthase A.